The primary structure comprises 397 residues: MTTGSKAKRRLTILGSTGSIGQNTLDVIAQLGGRDAFEIAAITGHDNIDLLASQAKACGAALAVTANEDRYQALKDALAGTGIAAAAGRNALIEAASIPSDWVMAAIVGTAGLAPTLEAARRGADIALANKECLVSAGDLFVRAVAEGGGRLIPVDSEHSAIFQALEDDQQHAVERIILTASGGPFRTWSREQMANVTPATARAHPNWSMGFKISIGSASMFNKALEMIEAKHLFNVRPEQIEVVVHPQSVIHSMVGYTDGSVLAQLGCPDMRTAIGYALTYPSRTKLDVERLDFTKLARLDFEAPDEVRFPALRLARTAMERGGLQGAIMNAAEEIAFHAFVDGRIGFLEMADIAEAVMDQMIATGTAETMDAVFAADEEARRRAGVLVAQREKAA.

T17, G18, S19, I20, N47, and N130 together coordinate NADPH. K131 contributes to the 1-deoxy-D-xylulose 5-phosphate binding site. E132 is an NADPH binding site. Residue D156 coordinates Mn(2+). Residues S157, E158, S182, and H205 each coordinate 1-deoxy-D-xylulose 5-phosphate. E158 contacts Mn(2+). G211 contributes to the NADPH binding site. 1-deoxy-D-xylulose 5-phosphate contacts are provided by S218, N223, K224, and E227. Position 227 (E227) interacts with Mn(2+).

This sequence belongs to the DXR family. Mg(2+) is required as a cofactor. The cofactor is Mn(2+).

It carries out the reaction 2-C-methyl-D-erythritol 4-phosphate + NADP(+) = 1-deoxy-D-xylulose 5-phosphate + NADPH + H(+). The protein operates within isoprenoid biosynthesis; isopentenyl diphosphate biosynthesis via DXP pathway; isopentenyl diphosphate from 1-deoxy-D-xylulose 5-phosphate: step 1/6. Catalyzes the NADPH-dependent rearrangement and reduction of 1-deoxy-D-xylulose-5-phosphate (DXP) to 2-C-methyl-D-erythritol 4-phosphate (MEP). The protein is 1-deoxy-D-xylulose 5-phosphate reductoisomerase of Rhizobium rhizogenes (strain K84 / ATCC BAA-868) (Agrobacterium radiobacter).